Reading from the N-terminus, the 393-residue chain is Protein shisa-9B (393 aa).

The N-terminal stretch at 1 to 20 is a signal peptide; it reads MKSTGLLLGYFLMKVLVCDA. Topologically, residues 21–131 are extracellular; the sequence is EGEPGKSLDG…MDQHDPTKDK (111 aa). Residues 28-52 are disordered; it reads LDGAVTASGSNDSRDGENGLSETPH. A glycan (N-linked (GlcNAc...) asparagine) is linked at Asn38. The chain crosses the membrane as a helical span at residues 132 to 152; it reads TNLIVYIICGVVAIMALVGIF. At 153-393 the chain is on the cytoplasmic side; sequence TKLGLEKAHR…VTNSKTEVTV (241 aa). A disordered region spans residues 307–340; the sequence is QKQNGHKSKSTKVHSSHPLAYGSNTIANPGRMSS. Positions 310–321 are enriched in basic residues; the sequence is NGHKSKSTKVHS.

Belongs to the shisa family. SHISA9 subfamily. As to quaternary structure, component of some AMPA receptors (ionotropic glutamate receptors) complex.

Its subcellular location is the cell projection. The protein localises to the dendritic spine membrane. The protein resides in the synapse. In terms of biological role, regulator of short-term neuronal synaptic plasticity in the dentate gyrus. Associates with AMPA receptors (ionotropic glutamate receptors) in synaptic spines and promotes AMPA receptor desensitization at excitatory synapses. This is Protein shisa-9B (shisa9b) from Danio rerio (Zebrafish).